We begin with the raw amino-acid sequence, 202 residues long: Josephin-1 (202 aa).

Serine 15 carries the phosphoserine modification. The 180-residue stretch at 23–202 (PPQIYHEKQR…EAHQSWRADV (180 aa)) folds into the Josephin domain. The active-site Nucleophile is the cysteine 36. Histidine 139 (proton acceptor) is an active-site residue.

As to quaternary structure, interacts with beta-actin/ACTB. Post-translationally, monoubiquitinated. Ubiquitination activates deubiquitination activity in vitro.

The protein localises to the cell membrane. It localises to the cytoplasm. The enzyme catalyses Thiol-dependent hydrolysis of ester, thioester, amide, peptide and isopeptide bonds formed by the C-terminal Gly of ubiquitin (a 76-residue protein attached to proteins as an intracellular targeting signal).. Functionally, deubiquitinates monoubiquitinated probes (in vitro). When ubiquitinated, cleaves 'Lys-63'-linked and 'Lys-48'-linked poly-ubiquitin chains (in vitro), hence may act as a deubiquitinating enzyme. May increase macropinocytosis and suppress clathrin- and caveolae-mediated endocytosis. May enhance membrane dynamics and cell motility independently of its catalytic activity. The sequence is that of Josephin-1 (JOSD1) from Bos taurus (Bovine).